The following is a 419-amino-acid chain: Multifunctional CCA protein (419 aa).

Residues Gly8 and Arg11 each contribute to the ATP site. 2 residues coordinate CTP: Gly8 and Arg11. Asp21 and Asp23 together coordinate Mg(2+). ATP-binding residues include Arg91, Arg149, and Arg152. The CTP site is built by Arg91, Arg149, and Arg152. Positions 238–339 constitute an HD domain; that stretch reads CGVHLMMVID…VRLLERCDAF (102 aa).

Belongs to the tRNA nucleotidyltransferase/poly(A) polymerase family. Bacterial CCA-adding enzyme type 1 subfamily. In terms of assembly, monomer. Can also form homodimers and oligomers. Mg(2+) is required as a cofactor. Ni(2+) serves as cofactor.

The enzyme catalyses a tRNA precursor + 2 CTP + ATP = a tRNA with a 3' CCA end + 3 diphosphate. The catalysed reaction is a tRNA with a 3' CCA end + 2 CTP + ATP = a tRNA with a 3' CCACCA end + 3 diphosphate. Functionally, catalyzes the addition and repair of the essential 3'-terminal CCA sequence in tRNAs without using a nucleic acid template. Adds these three nucleotides in the order of C, C, and A to the tRNA nucleotide-73, using CTP and ATP as substrates and producing inorganic pyrophosphate. tRNA 3'-terminal CCA addition is required both for tRNA processing and repair. Also involved in tRNA surveillance by mediating tandem CCA addition to generate a CCACCA at the 3' terminus of unstable tRNAs. While stable tRNAs receive only 3'-terminal CCA, unstable tRNAs are marked with CCACCA and rapidly degraded. This Variovorax paradoxus (strain S110) protein is Multifunctional CCA protein.